Here is a 142-residue protein sequence, read N- to C-terminus: Putative phosphatidylglycerol/phosphatidylinositol transfer protein 2 (142 aa).

The first 20 residues, 1–20, serve as a signal peptide directing secretion; it reads MKFYLYLSILLILLTSTSFG.

The protein belongs to the NPC2 family. Monomer.

In terms of biological role, catalyzes the intermembrane transfer of phosphatidylglycerol and phosphatidylinositol. The polypeptide is Putative phosphatidylglycerol/phosphatidylinositol transfer protein 2 (Dictyostelium discoideum (Social amoeba)).